We begin with the raw amino-acid sequence, 510 residues long: D-alanine--D-alanyl carrier protein ligase (510 aa).

157–158 lines the ATP pocket; that stretch reads TS. Aspartate 202 contacts D-alanine. 297–302 is an ATP binding site; sequence NTYGPT. Valine 306 lines the D-alanine pocket. The ATP site is built by aspartate 389 and lysine 498. Lysine 498 is a D-alanine binding site.

It belongs to the ATP-dependent AMP-binding enzyme family. DltA subfamily.

The protein resides in the cytoplasm. It carries out the reaction holo-[D-alanyl-carrier protein] + D-alanine + ATP = D-alanyl-[D-alanyl-carrier protein] + AMP + diphosphate. It functions in the pathway cell wall biogenesis; lipoteichoic acid biosynthesis. In terms of biological role, catalyzes the first step in the D-alanylation of lipoteichoic acid (LTA), the activation of D-alanine and its transfer onto the D-alanyl carrier protein (Dcp) DltC. In an ATP-dependent two-step reaction, forms a high energy D-alanyl-AMP intermediate, followed by transfer of the D-alanyl residue as a thiol ester to the phosphopantheinyl prosthetic group of the Dcp. D-alanylation of LTA plays an important role in modulating the properties of the cell wall in Gram-positive bacteria, influencing the net charge of the cell wall. This is D-alanine--D-alanyl carrier protein ligase from Listeria monocytogenes serotype 4a (strain HCC23).